The following is a 163-amino-acid chain: Phosphopantetheine adenylyltransferase (163 aa).

Position 10 (serine 10) interacts with substrate. Residues 10 to 11 (SF) and histidine 18 contribute to the ATP site. Substrate-binding residues include lysine 42, leucine 74, and arginine 88. ATP contacts are provided by residues 89–91 (GLR), glutamate 99, and 124–130 (YSFLSSS).

Belongs to the bacterial CoaD family. In terms of assembly, homohexamer. It depends on Mg(2+) as a cofactor.

The protein localises to the cytoplasm. It carries out the reaction (R)-4'-phosphopantetheine + ATP + H(+) = 3'-dephospho-CoA + diphosphate. The protein operates within cofactor biosynthesis; coenzyme A biosynthesis; CoA from (R)-pantothenate: step 4/5. Functionally, reversibly transfers an adenylyl group from ATP to 4'-phosphopantetheine, yielding dephospho-CoA (dPCoA) and pyrophosphate. This is Phosphopantetheine adenylyltransferase from Bacillus anthracis (strain A0248).